We begin with the raw amino-acid sequence, 374 residues long: SH2 domain-containing protein 2A (374 aa).

An SH2 domain is found at 116–207 (WFHGFITRRE…PYGEILTQPL (92 aa)). Residues 213 to 232 (EPAGLSLRADSDSGSKRQDP) form a disordered region. Residues 221-232 (ADSDSGSKRQDP) are compositionally biased toward basic and acidic residues. Residue serine 237 is modified to Phosphoserine. The segment at 241–301 (QQGQAQASGH…QAPPINPIYQ (61 aa)) is disordered. Residues 256-266 (ASQQKATSQAS) are compositionally biased toward polar residues. The SH3-binding signature appears at 267–273 (RPRPPIP). A compositionally biased stretch (pro residues) spans 268-279 (PRPPIPAKPQLP). Serine 316 is subject to Phosphoserine. Disordered stretches follow at residues 321–340 (PSNIYAEVEGPSGTAPIGHP) and 353–374 (GQVREVQGKISSRSRAERGSPS).

As to quaternary structure, interacts with KDR. Interacts with p56-LCK, TXK and ITK. In terms of processing, phosphorylated on tyrosine residues upon TCR-stimulation. In terms of tissue distribution, expression limited to tissues of the immune system and, in particular, activated T-cells and natural killer cells. Expressed in the thymus, lymph node, and to a lesser extent, in the spleen and bone marrow. According to PubMed:10553045, also expressed in the lung.

It is found in the cytoplasm. The protein localises to the cell membrane. Its function is as follows. Could be a T-cell-specific adapter protein involved in the control of T-cell activation. May play a role in p56-LCK-mediated T-cell signaling. Could be involved in the regulation of responses to T-cell activation stimuli, specifically proliferation and lymphokine production. Interactions with ITK and TXK may provide important biochemical links of these two important kinases with other components in the T-cell activation machinery. The sequence is that of SH2 domain-containing protein 2A (Sh2d2a) from Mus musculus (Mouse).